The chain runs to 157 residues: 6,7-dimethyl-8-ribityllumazine synthase 2 (157 aa).

5-amino-6-(D-ribitylamino)uracil-binding positions include tryptophan 21, 55–57 (AYE), and 79–81 (FVV). Catalysis depends on arginine 87, which acts as the Proton donor. Serine 112 contacts 5-amino-6-(D-ribitylamino)uracil. Histidine 126 contacts (2S)-2-hydroxy-3-oxobutyl phosphate.

The protein belongs to the DMRL synthase family. In terms of assembly, homodecamer, arranged as a dimer of pentamers.

It carries out the reaction (2S)-2-hydroxy-3-oxobutyl phosphate + 5-amino-6-(D-ribitylamino)uracil = 6,7-dimethyl-8-(1-D-ribityl)lumazine + phosphate + 2 H2O + H(+). It functions in the pathway cofactor biosynthesis; riboflavin biosynthesis; riboflavin from 2-hydroxy-3-oxobutyl phosphate and 5-amino-6-(D-ribitylamino)uracil: step 1/2. Functionally, catalyzes the formation of 6,7-dimethyl-8-ribityllumazine by condensation of 5-amino-6-(D-ribitylamino)uracil with 3,4-dihydroxy-2-butanone 4-phosphate. This is the penultimate step in the biosynthesis of riboflavin. This is 6,7-dimethyl-8-ribityllumazine synthase 2 (ribH2) from Mesorhizobium japonicum (strain LMG 29417 / CECT 9101 / MAFF 303099) (Mesorhizobium loti (strain MAFF 303099)).